The following is a 562-amino-acid chain: SPI-1 type 3 secretion system secretin (562 aa).

A signal peptide spans 1-24; the sequence is MKTHILLARVLACAALVLVTPGYS.

Belongs to the bacterial secretin family. T3SS SctC subfamily. The core secretion machinery of the T3SS is composed of approximately 20 different proteins, including cytoplasmic components, a base, an export apparatus and a needle. This subunit is part of the base, which anchors the injectisome in the bacterial cell envelope. Forms a stable homooligomeric complex. The complex is composed of 15 subunits.

Its subcellular location is the cell outer membrane. Its function is as follows. Component of the type III secretion system (T3SS), also called injectisome, which is used to inject bacterial effector proteins into eukaryotic host cells. Forms a ring-shaped multimeric structure with an apparent central pore in the outer membrane. The protein is SPI-1 type 3 secretion system secretin of Salmonella typhimurium (strain LT2 / SGSC1412 / ATCC 700720).